A 149-amino-acid chain; its full sequence is Transcriptional repressor NrdR (149 aa).

Residues 3 to 34 fold into a zinc finger; the sequence is CPFCQSDDTKVLDTRLIDDGSQVRRRRECVSC. The region spanning 49-139 is the ATP-cone domain; sequence PHLIKSDDSR…VYRQFQDIEA (91 aa).

This sequence belongs to the NrdR family. Zn(2+) serves as cofactor.

In terms of biological role, negatively regulates transcription of bacterial ribonucleotide reductase nrd genes and operons by binding to NrdR-boxes. In Ruthia magnifica subsp. Calyptogena magnifica, this protein is Transcriptional repressor NrdR.